A 580-amino-acid chain; its full sequence is Arginine--tRNA ligase (580 aa).

The short motif at 123–133 (PNIAKEMHVGH) is the 'HIGH' region element.

This sequence belongs to the class-I aminoacyl-tRNA synthetase family. Monomer.

The protein resides in the cytoplasm. The enzyme catalyses tRNA(Arg) + L-arginine + ATP = L-arginyl-tRNA(Arg) + AMP + diphosphate. The sequence is that of Arginine--tRNA ligase (argS) from Buchnera aphidicola subsp. Schizaphis graminum (strain Sg).